Consider the following 201-residue polypeptide: Retinol-binding protein 4 (201 aa).

The signal sequence occupies residues 1 to 18; it reads MEWVWALVLLAALGGGSA. 3 disulfides stabilise this stretch: cysteine 22/cysteine 178, cysteine 88/cysteine 192, and cysteine 138/cysteine 147. Residue glutamine 116 participates in substrate binding. Arginine 139 is modified (omega-N-methylarginine).

This sequence belongs to the calycin superfamily. Lipocalin family. As to quaternary structure, interacts with TTR. Interaction with TTR prevents its loss by filtration through the kidney glomeruli. Interacts with STRA6.

It is found in the secreted. Its function is as follows. Retinol-binding protein that mediates retinol transport in blood plasma. Delivers retinol from the liver stores to the peripheral tissues. Transfers the bound all-trans retinol to STRA6, that then facilitates retinol transport across the cell membrane. This Mus musculus (Mouse) protein is Retinol-binding protein 4 (Rbp4).